Here is a 353-residue protein sequence, read N- to C-terminus: Photosystem II protein D1 (353 aa).

Thr2 bears the N-acetylthreonine mark. At Thr2 the chain carries Phosphothreonine. 3 helical membrane-spanning segments follow: residues 29-46 (YIGWFGVLMIPTLLTATS), 118-133 (HFLLGVACYMGREWEL), and 142-156 (WIAVAYSAPVAAATA). Chlorophyll a is bound at residue His118. Tyr126 serves as a coordination point for pheophytin a. Residues Asp170 and Glu189 each coordinate [CaMn4O5] cluster. The helical transmembrane segment at 197-218 (FHMLGVAGVFGGSLFSAMHGSL) threads the bilayer. His198 contacts chlorophyll a. A quinone is bound by residues His215 and 264–265 (SF). His215 contacts Fe cation. His272 contacts Fe cation. A helical membrane pass occupies residues 274 to 288 (FLAAWPVVGIWFTAL). [CaMn4O5] cluster-binding residues include His332, Glu333, Asp342, and Ala344. A propeptide spanning residues 345–353 (AVEAPSTNG) is cleaved from the precursor.

It belongs to the reaction center PufL/M/PsbA/D family. As to quaternary structure, PSII is composed of 1 copy each of membrane proteins PsbA, PsbB, PsbC, PsbD, PsbE, PsbF, PsbH, PsbI, PsbJ, PsbK, PsbL, PsbM, PsbT, PsbX, PsbY, PsbZ, Psb30/Ycf12, at least 3 peripheral proteins of the oxygen-evolving complex and a large number of cofactors. It forms dimeric complexes. Requires The D1/D2 heterodimer binds P680, chlorophylls that are the primary electron donor of PSII, and subsequent electron acceptors. It shares a non-heme iron and each subunit binds pheophytin, quinone, additional chlorophylls, carotenoids and lipids. D1 provides most of the ligands for the Mn4-Ca-O5 cluster of the oxygen-evolving complex (OEC). There is also a Cl(-1) ion associated with D1 and D2, which is required for oxygen evolution. The PSII complex binds additional chlorophylls, carotenoids and specific lipids. as cofactor. Post-translationally, tyr-161 forms a radical intermediate that is referred to as redox-active TyrZ, YZ or Y-Z. C-terminally processed by CTPA; processing is essential to allow assembly of the oxygen-evolving complex and thus photosynthetic growth.

The protein resides in the plastid. It is found in the chloroplast thylakoid membrane. It carries out the reaction 2 a plastoquinone + 4 hnu + 2 H2O = 2 a plastoquinol + O2. Its function is as follows. Photosystem II (PSII) is a light-driven water:plastoquinone oxidoreductase that uses light energy to abstract electrons from H(2)O, generating O(2) and a proton gradient subsequently used for ATP formation. It consists of a core antenna complex that captures photons, and an electron transfer chain that converts photonic excitation into a charge separation. The D1/D2 (PsbA/PsbD) reaction center heterodimer binds P680, the primary electron donor of PSII as well as several subsequent electron acceptors. This chain is Photosystem II protein D1, found in Oenothera parviflora (Small-flowered evening primrose).